Here is a 477-residue protein sequence, read N- to C-terminus: Glycogen synthase (477 aa).

Lysine 15 is a binding site for ADP-alpha-D-glucose.

The protein belongs to the glycosyltransferase 1 family. Bacterial/plant glycogen synthase subfamily.

The enzyme catalyses [(1-&gt;4)-alpha-D-glucosyl](n) + ADP-alpha-D-glucose = [(1-&gt;4)-alpha-D-glucosyl](n+1) + ADP + H(+). It participates in glycan biosynthesis; glycogen biosynthesis. Functionally, synthesizes alpha-1,4-glucan chains using ADP-glucose. The chain is Glycogen synthase from Shigella boydii serotype 18 (strain CDC 3083-94 / BS512).